The chain runs to 217 residues: Polyadenylate-binding protein 3 (217 aa).

The segment at 1-28 (MEEEEHEVYGGEIPEVGDTDVPDPDIDM) is disordered. The segment covering 15–28 (EVGDTDVPDPDIDM) has biased composition (acidic residues). A coiled-coil region spans residues 30–71 (AADEDAVTELAEMKRRLKEMEEEAAALREMQAKVEKEMGATQ). A necessary for homooligomerization region spans residues 75–216 (SMAANQEGKE…FRRPMRYMPY (142 aa)). Residues 89-165 (RSVYVGNVDY…RQLKVSPKRT (77 aa)) form the RRM domain. The Nuclear localization signal signature appears at 162 to 169 (PKRTNVPG).

Monomer and homooligomer. Binds RNA as a monomer and oligomerizes when bound to poly(A). Forms a complex with cleavage and polyadenylation specificity factor (CPSF) subunits PAPS4, PABN1, PABN2, CSTF50 and FIPS5. Interacts with CSP3.

Its subcellular location is the nucleus speckle. It localises to the cytoplasm. Involved in the 3'-end formation of mRNA precursors (pre-mRNA) by the addition of a poly(A) tail of 200-250 nt to the upstream cleavage product. Stimulates poly(A) polymerase (PAPOLA) conferring processivity on the poly(A) tail elongation reaction and also controls the poly(A) tail length. Increases the affinity of poly(A) polymerase for RNA. Binds to poly(A) and to poly(G) with high affinity. May protect the poly(A) tail from degradation. The protein is Polyadenylate-binding protein 3 of Arabidopsis thaliana (Mouse-ear cress).